We begin with the raw amino-acid sequence, 456 residues long: Adenylosuccinate lyase (456 aa).

N(6)-(1,2-dicarboxyethyl)-AMP contacts are provided by residues 15 to 16 (RY) and 90 to 92 (NHD). At Lys94 the chain carries N6-acetyllysine. N(6)-(1,2-dicarboxyethyl)-AMP is bound at residue 122 to 123 (TS). Residue His171 is the Proton donor/acceptor of the active site. Position 247 (Gln247) interacts with N(6)-(1,2-dicarboxyethyl)-AMP. The active-site Proton donor/acceptor is Ser295. N(6)-(1,2-dicarboxyethyl)-AMP contacts are provided by residues Ser296, 301–303 (KVN), Asn309, Arg335, and 340–344 (STVLR). Lys366 bears the N6-acetyllysine mark.

The protein belongs to the lyase 1 family. Adenylosuccinate lyase subfamily. In terms of assembly, homotetramer. Residues from neighboring subunits contribute catalytic and substrate-binding residues to each active site.

The enzyme catalyses N(6)-(1,2-dicarboxyethyl)-AMP = fumarate + AMP. It catalyses the reaction (2S)-2-[5-amino-1-(5-phospho-beta-D-ribosyl)imidazole-4-carboxamido]succinate = 5-amino-1-(5-phospho-beta-D-ribosyl)imidazole-4-carboxamide + fumarate. It participates in purine metabolism; AMP biosynthesis via de novo pathway; AMP from IMP: step 2/2. It functions in the pathway purine metabolism; IMP biosynthesis via de novo pathway; 5-amino-1-(5-phospho-D-ribosyl)imidazole-4-carboxamide from 5-amino-1-(5-phospho-D-ribosyl)imidazole-4-carboxylate: step 2/2. In terms of biological role, catalyzes two reactions in de novo purine nucleotide biosynthesis. Catalyzes the breakdown of 5-aminoimidazole- (N-succinylocarboxamide) ribotide (SAICAR or 2-[5-amino-1-(5-phospho-beta-D-ribosyl)imidazole-4-carboxamido]succinate) to 5-aminoimidazole-4-carboxamide ribotide (AICAR or 5-amino-1-(5-phospho-beta-D-ribosyl)imidazole-4-carboxamide) and fumarate, and of adenylosuccinate (ADS or N(6)-(1,2-dicarboxyethyl)-AMP) to adenosine monophosphate (AMP) and fumarate. This chain is Adenylosuccinate lyase (purB), found in Escherichia coli O6:H1 (strain CFT073 / ATCC 700928 / UPEC).